The chain runs to 345 residues: N-acetyl-gamma-glutamyl-phosphate reductase (345 aa).

Residue Cys-149 is part of the active site.

It belongs to the NAGSA dehydrogenase family. Type 1 subfamily.

The protein localises to the cytoplasm. It carries out the reaction N-acetyl-L-glutamate 5-semialdehyde + phosphate + NADP(+) = N-acetyl-L-glutamyl 5-phosphate + NADPH + H(+). Its pathway is amino-acid biosynthesis; L-arginine biosynthesis; N(2)-acetyl-L-ornithine from L-glutamate: step 3/4. In terms of biological role, catalyzes the NADPH-dependent reduction of N-acetyl-5-glutamyl phosphate to yield N-acetyl-L-glutamate 5-semialdehyde. The chain is N-acetyl-gamma-glutamyl-phosphate reductase from Bacillus subtilis (strain 168).